The sequence spans 397 residues: NADH-quinone oxidoreductase subunit H 1 (397 aa).

10 consecutive transmembrane segments (helical) span residues 7–27, 84–104, 120–140, 156–176, 198–218, 258–278, 279–299, 313–333, 337–357, and 376–396; these read FIFI…TTLA, PFLA…GPVI, IGVL…ALAG, SAQM…PLLI, LLSG…AAFA, MITV…APWP, AAYG…LVLL, TFPA…LPMV, LLPL…FMWI, and FLFP…AWTT.

Belongs to the complex I subunit 1 family. NDH-1 is composed of 14 different subunits. Subunits NuoA, H, J, K, L, M, N constitute the membrane sector of the complex.

The protein resides in the cell inner membrane. The catalysed reaction is a quinone + NADH + 5 H(+)(in) = a quinol + NAD(+) + 4 H(+)(out). Functionally, NDH-1 shuttles electrons from NADH, via FMN and iron-sulfur (Fe-S) centers, to quinones in the respiratory chain. The immediate electron acceptor for the enzyme in this species is believed to be ubiquinone. Couples the redox reaction to proton translocation (for every two electrons transferred, four hydrogen ions are translocated across the cytoplasmic membrane), and thus conserves the redox energy in a proton gradient. This subunit may bind ubiquinone. The protein is NADH-quinone oxidoreductase subunit H 1 of Solibacter usitatus (strain Ellin6076).